The sequence spans 361 residues: MAQVYNFSSGPAMLPADVLRVAQEELRDWQGLGTSVMEISHRSKEFIQVAEQAEQDFRDLLEIPSNYKVLFCHGGGRGQFSALPLNLLGNKTTADYVDGGYWAASAVKEAKKYLTPNVIDAKITVDGKRAIKPMSEWQLSADAAYVHYCPNETIDGIAINDTPDFGDAIVTADFSSTILSHPIDVSRYGVIYAGAQKNIGPAGLTLVIVREDLLGKAHVSCPSVLDYSVLSENDSMFNTPPTFAWYLAGLVFKWLKTNGGVAAMDKINQQKADLLYGVIDNSDFYRNDVATANRSRMNVPFQLADSSLDKLFLEESFAAGLHALKGHRVVGGMRASIYNAMPLEGVKALTDFMVDFERRHG.

S9 and R42 together coordinate L-glutamate. Pyridoxal 5'-phosphate contacts are provided by residues 76-77 (GR), W102, T153, D173, and Q196. K197 bears the N6-(pyridoxal phosphate)lysine mark. 238 to 239 (NT) contributes to the pyridoxal 5'-phosphate binding site.

Belongs to the class-V pyridoxal-phosphate-dependent aminotransferase family. SerC subfamily. As to quaternary structure, homodimer. It depends on pyridoxal 5'-phosphate as a cofactor.

The protein resides in the cytoplasm. The enzyme catalyses O-phospho-L-serine + 2-oxoglutarate = 3-phosphooxypyruvate + L-glutamate. The catalysed reaction is 4-(phosphooxy)-L-threonine + 2-oxoglutarate = (R)-3-hydroxy-2-oxo-4-phosphooxybutanoate + L-glutamate. Its pathway is amino-acid biosynthesis; L-serine biosynthesis; L-serine from 3-phospho-D-glycerate: step 2/3. It participates in cofactor biosynthesis; pyridoxine 5'-phosphate biosynthesis; pyridoxine 5'-phosphate from D-erythrose 4-phosphate: step 3/5. Functionally, catalyzes the reversible conversion of 3-phosphohydroxypyruvate to phosphoserine and of 3-hydroxy-2-oxo-4-phosphonooxybutanoate to phosphohydroxythreonine. This chain is Phosphoserine aminotransferase, found in Cronobacter sakazakii (strain ATCC BAA-894) (Enterobacter sakazakii).